We begin with the raw amino-acid sequence, 295 residues long: RNA polymerase sigma-C factor (295 aa).

The short motif at 73–86 (DLIQEANIGLMKAV) is the Polymerase core binding element. The segment at residues 250–269 (LSELGEHFGFSRERARQLEI) is a DNA-binding region (H-T-H motif).

This sequence belongs to the sigma-70 factor family.

In terms of biological role, sigma factors are initiation factors that promote the attachment of RNA polymerase to specific initiation sites and are then released. This sigma factor is essential for normal fruiting body formation. The sequence is that of RNA polymerase sigma-C factor (sigC) from Myxococcus xanthus.